Consider the following 202-residue polypeptide: Glycerol-3-phosphate acyltransferase (202 aa).

The next 6 helical transmembrane spans lie at 2-22 (MIIVMLLLSYLIGAFPSGFVI), 54-74 (FLVTFLDIFKGFITVFFPLWL), 85-105 (FFTNGLIVGLFAILGHVYPVY), 120-140 (VVLGVNPILLLILAIIFFIVL), 141-161 (KIFKYVSLASIVAAICCVIGS), and 162-182 (LIIQDYILLVVSFLVSIILII).

It belongs to the PlsY family. In terms of assembly, probably interacts with PlsX.

It is found in the cell membrane. The enzyme catalyses an acyl phosphate + sn-glycerol 3-phosphate = a 1-acyl-sn-glycero-3-phosphate + phosphate. It participates in lipid metabolism; phospholipid metabolism. Catalyzes the transfer of an acyl group from acyl-phosphate (acyl-PO(4)) to glycerol-3-phosphate (G3P) to form lysophosphatidic acid (LPA). This enzyme utilizes acyl-phosphate as fatty acyl donor, but not acyl-CoA or acyl-ACP. The protein is Glycerol-3-phosphate acyltransferase of Staphylococcus aureus (strain USA300).